Here is a 111-residue protein sequence, read N- to C-terminus: MIWLVLILASLLSVTGQLCQKQATRPVAINKRRKHIALWLGLGLVCLGLAMVLWLLVLQTVPVGIAYPMLSLNFVWVTLAATKLWHEPVSFRHWCGVAFIIGGIVILGSTV.

The Cytoplasmic segment spans residues 1-37 (MIWLVLILASLLSVTGQLCQKQATRPVAINKRRKHIA). The helical transmembrane segment at 38–58 (LWLGLGLVCLGLAMVLWLLVL) threads the bilayer. An EamA domain is found at 40–109 (LGLGLVCLGL…IIGGIVILGS (70 aa)). Over 59–60 (QT) the chain is Periplasmic. Residues 61-81 (VPVGIAYPMLSLNFVWVTLAA) form a helical membrane-spanning segment. The Cytoplasmic segment spans residues 82 to 87 (TKLWHE). Residues 88–108 (PVSFRHWCGVAFIIGGIVILG) form a helical membrane-spanning segment. Residues 109-111 (STV) lie on the Periplasmic side of the membrane.

It belongs to the ArnE family. In terms of assembly, heterodimer of ArnE and ArnF.

The protein resides in the cell inner membrane. It participates in bacterial outer membrane biogenesis; lipopolysaccharide biosynthesis. Functionally, translocates 4-amino-4-deoxy-L-arabinose-phosphoundecaprenol (alpha-L-Ara4N-phosphoundecaprenol) from the cytoplasmic to the periplasmic side of the inner membrane. This is Probable 4-amino-4-deoxy-L-arabinose-phosphoundecaprenol flippase subunit ArnE from Escherichia fergusonii (strain ATCC 35469 / DSM 13698 / CCUG 18766 / IAM 14443 / JCM 21226 / LMG 7866 / NBRC 102419 / NCTC 12128 / CDC 0568-73).